Here is a 232-residue protein sequence, read N- to C-terminus: Ribonuclease P protein component 3 (232 aa).

Belongs to the eukaryotic/archaeal RNase P protein component 3 family. Consists of a catalytic RNA component and at least 5 protein subunits.

The protein localises to the cytoplasm. The enzyme catalyses Endonucleolytic cleavage of RNA, removing 5'-extranucleotides from tRNA precursor.. Its function is as follows. Part of ribonuclease P, a protein complex that generates mature tRNA molecules by cleaving their 5'-ends. This is Ribonuclease P protein component 3 from Methanococcus maripaludis (strain DSM 14266 / JCM 13030 / NBRC 101832 / S2 / LL).